An 891-amino-acid chain; its full sequence is Microtubule-associated protein 10 (891 aa).

Disordered regions lie at residues 325-355 (AAVQ…PPQI), 401-457 (EDKG…VTKG), 504-679 (SWKG…KSSC), and 702-844 (TTEN…SNLS). Positions 407-417 (PSTKSTSPSES) are enriched in low complexity. Composition is skewed to polar residues over residues 509–520 (VSSSAAESQMSP) and 527–544 (PTDS…SQLP). 2 stretches are compositionally biased toward basic and acidic residues: residues 577 to 592 (STTK…KQEM) and 645 to 658 (TVDK…DGRQ). Composition is skewed to polar residues over residues 665 to 679 (ADTS…KSSC), 702 to 718 (TTEN…SSTG), 726 to 749 (SRAS…SSVL), 776 to 790 (EASS…SQWT), and 826 to 844 (KSQS…SNLS).

As to quaternary structure, interacts (via middle region) with microtubules.

The protein localises to the cytoplasm. Its subcellular location is the cytoskeleton. The protein resides in the spindle pole. It localises to the microtubule organizing center. It is found in the centrosome. The protein localises to the midbody. Functionally, microtubule-associated protein (MAP) that plays a role in the regulation of cell division; promotes microtubule stability and participates in the organization of the spindle midzone and normal progress of cytokinesis. The polypeptide is Microtubule-associated protein 10 (Map10) (Mus musculus (Mouse)).